Consider the following 75-residue polypeptide: Anionic peptide (75 aa).

The signal sequence occupies residues 1 to 24 (MVSKSLIVLLLVSVLVSTFYTSEA).

Belongs to the non-disulfide-bridged peptide (NDBP) superfamily. In terms of tissue distribution, expressed by the venom gland.

Its subcellular location is the secreted. The protein is Anionic peptide of Tityus discrepans (Venezuelan scorpion).